A 959-amino-acid chain; its full sequence is Translation initiation factor IF-2 (959 aa).

Positions 1-10 (MSDKTNDDKT) are enriched in basic and acidic residues. A disordered region spans residues 1–374 (MSDKTNDDKT…SQMQETREKI (374 aa)). Over residues 27–37 (EQSTVRQNFSH) the composition is skewed to polar residues. Low complexity-rich tracts occupy residues 63–118 (AAAA…VTKP) and 128–138 (QRPGGQQAQRP). Basic and acidic residues-rich tracts occupy residues 154-225 (SEMD…EAAK) and 232-241 (ARSERRDDAR). Low complexity predominate over residues 246–284 (GARPQQAGRPQGGRPQPAGRPQQGSPRPAPIIADAAPIA). Over residues 318–333 (PEVRAPKVVKGEDDRR) the composition is skewed to basic and acidic residues. Positions 457–626 (SRPPVVTIMG…LLQAEMLDLK (170 aa)) constitute a tr-type G domain. The tract at residues 466-473 (GHVDHGKT) is G1. 466–473 (GHVDHGKT) contributes to the GTP binding site. The segment at 491-495 (GITQH) is G2. A G3 region spans residues 512–515 (DTPG). Residues 512 to 516 (DTPGH) and 566 to 569 (NKID) contribute to the GTP site. The interval 566–569 (NKID) is G4. Residues 602-604 (SAK) form a G5 region.

Belongs to the TRAFAC class translation factor GTPase superfamily. Classic translation factor GTPase family. IF-2 subfamily.

It localises to the cytoplasm. Its function is as follows. One of the essential components for the initiation of protein synthesis. Protects formylmethionyl-tRNA from spontaneous hydrolysis and promotes its binding to the 30S ribosomal subunits. Also involved in the hydrolysis of GTP during the formation of the 70S ribosomal complex. This chain is Translation initiation factor IF-2, found in Brucella melitensis biotype 1 (strain ATCC 23456 / CCUG 17765 / NCTC 10094 / 16M).